Here is a 392-residue protein sequence, read N- to C-terminus: Putative nickel insertion protein (392 aa).

This sequence belongs to the LarC family.

This is Putative nickel insertion protein from Pelobacter propionicus (strain DSM 2379 / NBRC 103807 / OttBd1).